Here is a 363-residue protein sequence, read N- to C-terminus: Neutral protease 2 homolog MEP7 (363 aa).

The first 19 residues, 1 to 19, serve as a signal peptide directing secretion; that stretch reads MLLCSMVAALAALATPAFS. A propeptide spanning residues 20-181 is cleaved from the precursor; sequence CALPHLDLPE…ARAIQPLDRR (162 aa). Cystine bridges form between cysteine 187–cysteine 259 and cysteine 266–cysteine 284. Histidine 308 serves as a coordination point for Zn(2+). Residue glutamate 309 is part of the active site. Zn(2+) contacts are provided by histidine 312 and aspartate 323.

It belongs to the peptidase M35 family. The cofactor is Zn(2+).

It is found in the secreted. It catalyses the reaction Preferential cleavage of bonds with hydrophobic residues in P1'. Also 3-Asn-|-Gln-4 and 8-Gly-|-Ser-9 bonds in insulin B chain.. Its function is as follows. Secreted metalloproteinase that allows assimilation of proteinaceous substrates. Shows high activities on basic nuclear substrates such as histone and protamine. May be involved in virulence. The polypeptide is Neutral protease 2 homolog MEP7 (MEP7) (Coccidioides posadasii (strain C735) (Valley fever fungus)).